The chain runs to 458 residues: Kelch repeat and BTB domain-containing protein 13 (458 aa).

In terms of domain architecture, BTB spans Thr7–Ala74. Kelch repeat units follow at residues Ala159–Asn209, Lys210–Gly258, Arg259–Gly305, Leu307–Arg350, and Ser352–Gly400.

As to quaternary structure, component of the BCR(KBTBD13) E3 ubiquitin ligase complex, at least composed of CUL3 and KBTBD13 and RBX1. Interacts with CUL3. Autoubiquitinated. As to expression, expressed in skeletal muscle.

It localises to the cytoplasm. Its pathway is protein modification; protein ubiquitination. Its function is as follows. Substrate-specific adapter of a BCR (BTB-CUL3-RBX1) E3 ubiquitin ligase complex. The polypeptide is Kelch repeat and BTB domain-containing protein 13 (KBTBD13) (Homo sapiens (Human)).